The chain runs to 221 residues: DNA mismatch repair protein MutH (221 aa).

It belongs to the MutH family.

The protein localises to the cytoplasm. In terms of biological role, sequence-specific endonuclease that cleaves unmethylated GATC sequences. It is involved in DNA mismatch repair. The polypeptide is DNA mismatch repair protein MutH (Vibrio cholerae serotype O1 (strain ATCC 39315 / El Tor Inaba N16961)).